Reading from the N-terminus, the 552-residue chain is Dihydroxy-acid dehydratase (552 aa).

Aspartate 78 is a Mg(2+) binding site. Cysteine 119 contacts [2Fe-2S] cluster. Residues aspartate 120 and lysine 121 each coordinate Mg(2+). Lysine 121 bears the N6-carboxylysine mark. Residue cysteine 191 participates in [2Fe-2S] cluster binding. Position 442 (glutamate 442) interacts with Mg(2+). Catalysis depends on serine 468, which acts as the Proton acceptor.

It belongs to the IlvD/Edd family. As to quaternary structure, homodimer. [2Fe-2S] cluster is required as a cofactor. The cofactor is Mg(2+).

The enzyme catalyses (2R)-2,3-dihydroxy-3-methylbutanoate = 3-methyl-2-oxobutanoate + H2O. It catalyses the reaction (2R,3R)-2,3-dihydroxy-3-methylpentanoate = (S)-3-methyl-2-oxopentanoate + H2O. It participates in amino-acid biosynthesis; L-isoleucine biosynthesis; L-isoleucine from 2-oxobutanoate: step 3/4. It functions in the pathway amino-acid biosynthesis; L-valine biosynthesis; L-valine from pyruvate: step 3/4. In terms of biological role, functions in the biosynthesis of branched-chain amino acids. Catalyzes the dehydration of (2R,3R)-2,3-dihydroxy-3-methylpentanoate (2,3-dihydroxy-3-methylvalerate) into 2-oxo-3-methylpentanoate (2-oxo-3-methylvalerate) and of (2R)-2,3-dihydroxy-3-methylbutanoate (2,3-dihydroxyisovalerate) into 2-oxo-3-methylbutanoate (2-oxoisovalerate), the penultimate precursor to L-isoleucine and L-valine, respectively. This chain is Dihydroxy-acid dehydratase, found in Clostridium botulinum (strain Eklund 17B / Type B).